Here is a 397-residue protein sequence, read N- to C-terminus: MNIHEYQAKELLRGYGAPVAQGVAIFTSGEAEAAAKKLPGPLYVVKSQIHAGGRGKGKFKELSPDAKGGVRLAKSIEEVVANAKEMLGNTLVTKQTGPEGKQVNRLYIEDGADIARELYLSILIDRTVGRPAFVVSTEGGMDIEAVAEETPEKILTLAIAPERGVTNDDVTKLNAALKLDGAAAKDGETLFPILYKAFTEKDMSLLEVNPLIVMQNGRLRVLDAKVSFDNNALFRHEDVVELRDTSEEDEKEIEASKYDLAYVALDGDIGCMVNGAGLAMATMDIIKLYGAEPANFLDVGGGASKEKVTAAFKIITADPNVKGILVNIFGGIMRCDVIAEGVIAAVKEVGLKVPLVVRLEGTNVDLGKKIISQSGLNVIPADDLDDAAKKIVAAVKS.

The ATP-grasp domain maps to 9-254; sequence KELLRGYGAP…TSEEDEKEIE (246 aa). Residues lysine 46, 53–55, glutamate 109, alanine 112, and glutamate 117 each bind ATP; that span reads GRG. Positions 209 and 223 each coordinate Mg(2+). Residues asparagine 274 and 331–333 contribute to the substrate site; that span reads GIM.

The protein belongs to the succinate/malate CoA ligase beta subunit family. As to quaternary structure, heterotetramer of two alpha and two beta subunits. The cofactor is Mg(2+).

The catalysed reaction is succinate + ATP + CoA = succinyl-CoA + ADP + phosphate. The enzyme catalyses GTP + succinate + CoA = succinyl-CoA + GDP + phosphate. The protein operates within carbohydrate metabolism; tricarboxylic acid cycle; succinate from succinyl-CoA (ligase route): step 1/1. Succinyl-CoA synthetase functions in the citric acid cycle (TCA), coupling the hydrolysis of succinyl-CoA to the synthesis of either ATP or GTP and thus represents the only step of substrate-level phosphorylation in the TCA. The beta subunit provides nucleotide specificity of the enzyme and binds the substrate succinate, while the binding sites for coenzyme A and phosphate are found in the alpha subunit. The protein is Succinate--CoA ligase [ADP-forming] subunit beta of Chelativorans sp. (strain BNC1).